Reading from the N-terminus, the 490-residue chain is Glutamyl-tRNA(Gln) amidotransferase subunit A (490 aa).

Catalysis depends on charge relay system residues Lys-78 and Ser-159. Ser-183 serves as the catalytic Acyl-ester intermediate.

The protein belongs to the amidase family. GatA subfamily. In terms of assembly, heterotrimer of A, B and C subunits.

The catalysed reaction is L-glutamyl-tRNA(Gln) + L-glutamine + ATP + H2O = L-glutaminyl-tRNA(Gln) + L-glutamate + ADP + phosphate + H(+). Functionally, allows the formation of correctly charged Gln-tRNA(Gln) through the transamidation of misacylated Glu-tRNA(Gln) in organisms which lack glutaminyl-tRNA synthetase. The reaction takes place in the presence of glutamine and ATP through an activated gamma-phospho-Glu-tRNA(Gln). This chain is Glutamyl-tRNA(Gln) amidotransferase subunit A, found in Paramagnetospirillum magneticum (strain ATCC 700264 / AMB-1) (Magnetospirillum magneticum).